The chain runs to 175 residues: NADH-ubiquinone oxidoreductase chain 6 (175 aa).

The next 6 helical transmembrane spans lie at 1 to 21 (MMAY…VGFS), 25 to 45 (SPIY…GIVM), 47 to 67 (FGGS…MLVV), 87 to 107 (AAVL…VLYV), 116 to 136 (VFNF…FGVF), and 149 to 169 (YGVW…LVIL).

This sequence belongs to the complex I subunit 6 family. In terms of assembly, core subunit of respiratory chain NADH dehydrogenase (Complex I) which is composed of 45 different subunits.

It is found in the mitochondrion inner membrane. The enzyme catalyses a ubiquinone + NADH + 5 H(+)(in) = a ubiquinol + NAD(+) + 4 H(+)(out). Functionally, core subunit of the mitochondrial membrane respiratory chain NADH dehydrogenase (Complex I) which catalyzes electron transfer from NADH through the respiratory chain, using ubiquinone as an electron acceptor. Essential for the catalytic activity and assembly of complex I. This chain is NADH-ubiquinone oxidoreductase chain 6 (MT-ND6), found in Ceratotherium simum (White rhinoceros).